Here is a 117-residue protein sequence, read N- to C-terminus: Hemerythrin subunit beta (117 aa).

Residues H24, H53, E57, H72, H76, H105, and D110 each contribute to the Fe cation site.

The protein belongs to the hemerythrin family. In terms of assembly, octamer composed of two types of chains: alpha and beta.

Functionally, hemerythrin is a respiratory protein in blood cells of certain marine worms. The oxygen-binding site in each chain contains two iron atoms. The chain is Hemerythrin subunit beta from Lingula anatina (Brachiopod).